The following is a 123-amino-acid chain: Small ribosomal subunit protein uS12cz/uS12cy (123 aa).

This sequence belongs to the universal ribosomal protein uS12 family. As to quaternary structure, part of the 30S ribosomal subunit.

The protein resides in the plastid. It localises to the chloroplast. In terms of biological role, with S4 and S5 plays an important role in translational accuracy. Located at the interface of the 30S and 50S subunits. This Arabis hirsuta (Hairy rock-cress) protein is Small ribosomal subunit protein uS12cz/uS12cy (rps12-A).